We begin with the raw amino-acid sequence, 396 residues long: DNA-directed RNA polymerase subunit 6 (396 aa).

Disordered regions lie at residues 1 to 137 and 290 to 396; these read MSSK…DIED and NQQK…DYSE. 3 stretches are compositionally biased toward acidic residues: residues 21-53, 76-88, and 97-137; these read EYYD…DDEN, IDPD…DTDG, and EMGE…DIED. Over residues 290-312 the composition is skewed to polar residues; sequence NQQKNSTTDTETLSTQENASTRV. Low complexity-rich tracts occupy residues 313–338 and 346–366; these read SGSN…SKSN and NSRT…SRTG. The segment covering 367–380 has biased composition (basic residues); that stretch reads SKSKKSSNTKSKSK. A compositionally biased stretch (acidic residues) spans 385–396; it reads NSDDSDYSDYSE.

This sequence belongs to the archaeal Rpo6/eukaryotic RPB6 RNA polymerase subunit family.

The catalysed reaction is RNA(n) + a ribonucleoside 5'-triphosphate = RNA(n+1) + diphosphate. Its function is as follows. DNA-dependent RNA polymerase catalyzes the transcription of DNA into RNA using the four ribonucleoside triphosphates as substrates. This Acanthamoeba polyphaga (Amoeba) protein is DNA-directed RNA polymerase subunit 6.